Consider the following 98-residue polypeptide: Small ribosomal subunit protein bS20 (98 aa).

Basic residues predominate over residues 1–12 (MAPKKTTKKGGP). Residues 1–20 (MAPKKTTKKGGPQKRPSAEK) are disordered.

The protein belongs to the bacterial ribosomal protein bS20 family.

Its function is as follows. Binds directly to 16S ribosomal RNA. This Chlamydia caviae (strain ATCC VR-813 / DSM 19441 / 03DC25 / GPIC) (Chlamydophila caviae) protein is Small ribosomal subunit protein bS20.